Reading from the N-terminus, the 187-residue chain is Small ribosomal subunit protein uS7 (187 aa).

Belongs to the universal ribosomal protein uS7 family. In terms of assembly, part of the 30S ribosomal subunit.

Functionally, one of the primary rRNA binding proteins, it binds directly to 16S rRNA where it nucleates assembly of the head domain of the 30S subunit. Is located at the subunit interface close to the decoding center. The polypeptide is Small ribosomal subunit protein uS7 (Picrophilus torridus (strain ATCC 700027 / DSM 9790 / JCM 10055 / NBRC 100828 / KAW 2/3)).